Here is a 265-residue protein sequence, read N- to C-terminus: Ribosomal RNA small subunit methyltransferase A (265 aa).

Residues His-13, Leu-15, Gly-40, Glu-61, Asp-85, and Asn-103 each coordinate S-adenosyl-L-methionine.

This sequence belongs to the class I-like SAM-binding methyltransferase superfamily. rRNA adenine N(6)-methyltransferase family. RsmA subfamily.

Its subcellular location is the cytoplasm. It carries out the reaction adenosine(1518)/adenosine(1519) in 16S rRNA + 4 S-adenosyl-L-methionine = N(6)-dimethyladenosine(1518)/N(6)-dimethyladenosine(1519) in 16S rRNA + 4 S-adenosyl-L-homocysteine + 4 H(+). Functionally, specifically dimethylates two adjacent adenosines (A1518 and A1519) in the loop of a conserved hairpin near the 3'-end of 16S rRNA in the 30S particle. May play a critical role in biogenesis of 30S subunits. This is Ribosomal RNA small subunit methyltransferase A from Bordetella pertussis (strain Tohama I / ATCC BAA-589 / NCTC 13251).